The primary structure comprises 318 residues: NADH-ubiquinone oxidoreductase chain 1 (318 aa).

Helical transmembrane passes span 3–23 (FINI…LTLV), 70–90 (LFII…IPLP), 100–120 (LGML…LWSG), 146–166 (MAII…QMLI), 171–191 (HIWL…STLA), 231–251 (IILM…HINY), 254–273 (LYST…FLWI), and 294–314 (LPLT…LAGI).

The protein belongs to the complex I subunit 1 family. Core subunit of respiratory chain NADH dehydrogenase (Complex I) which is composed of 45 different subunits.

Its subcellular location is the mitochondrion inner membrane. The catalysed reaction is a ubiquinone + NADH + 5 H(+)(in) = a ubiquinol + NAD(+) + 4 H(+)(out). Its function is as follows. Core subunit of the mitochondrial membrane respiratory chain NADH dehydrogenase (Complex I) which catalyzes electron transfer from NADH through the respiratory chain, using ubiquinone as an electron acceptor. Essential for the catalytic activity and assembly of complex I. The polypeptide is NADH-ubiquinone oxidoreductase chain 1 (Rattus norvegicus (Rat)).